The sequence spans 829 residues: E3 ubiquitin-protein ligase Jade-2 (829 aa).

The interval 1 to 52 (MEEKRRKYSISSDNSDTTDGHVTSTSASRCSKLPSSTKSGWPRQNEKKPSEV) is disordered. A phosphoserine mark is found at Ser9 and Ser15. The segment covering 9 to 39 (SISSDNSDTTDGHVTSTSASRCSKLPSSTKS) has biased composition (polar residues). An N6-acetyllysine mark is found at Lys32 and Lys38. Position 117 is a phosphoserine (Ser117). The PHD-type 1 zinc finger occupies 199–249 (DVVCDVCRSPEGEDGNEMVFCDKCNVCVHQACYGILKVPTGSWLCRTCALG). Residues 251 to 285 (QPKCLLCPKRGGALKPTRSGTKWVHVSCALWIPEV) form a C2HC pre-PHD-type zinc finger. Lys298 carries the post-translational modification N6-acetyllysine. Residues 309–365 (LSCSLCKECTGTCIQCSMPSCITAFHVTCAFDRGLEMRTILADNDEVKFKSLCQEHS) form a PHD-type 2 zinc finger. Disordered stretches follow at residues 362 to 383 (QEHSDGGPRSEPTSEPVEPSQA), 517 to 555 (REPSGRRSKGKKNDSKRKGREGPKGSSPEKKEKVKAGPE), and 622 to 817 (SFMR…REAG). Basic residues predominate over residues 522–535 (RRSKGKKNDSKRKG). Residues 536-552 (REGPKGSSPEKKEKVKA) are compositionally biased toward basic and acidic residues. Residues 637 to 650 (KARGRTRLPAKKKP) are compositionally biased toward basic residues. Residues 776-786 (ERPKVSLHFDT) are compositionally biased toward basic and acidic residues. Over residues 792–806 (FSDEEMSDSEVEAED) the composition is skewed to acidic residues.

This sequence belongs to the JADE family. As to quaternary structure, component of the HBO1 complex composed at least of ING4 or ING5, MYST2/HBO1, MEAF6, and one of JADE1, JADE2 and JADE3. Interacts (via C-terminus) with KDM1A (via AOD/Tower domain).

It carries out the reaction S-ubiquitinyl-[E2 ubiquitin-conjugating enzyme]-L-cysteine + [acceptor protein]-L-lysine = [E2 ubiquitin-conjugating enzyme]-L-cysteine + N(6)-ubiquitinyl-[acceptor protein]-L-lysine.. Its pathway is protein modification; protein ubiquitination. In terms of biological role, scaffold subunit of some HBO1 complexes, which have a histone H4 acetyltransferase activity. Acts as a E3 ubiquitin-protein ligase mediating the ubiquitination and subsequent proteasomal degradation of target protein histone demethylase KDM1A. Also acts as a ubiquitin ligase E3 toward itself. Positive regulator of neurogenesis. The chain is E3 ubiquitin-protein ligase Jade-2 (Jade2) from Mus musculus (Mouse).